A 425-amino-acid polypeptide reads, in one-letter code: 5-nitroanthranilic acid aminohydrolase (425 aa).

Asp88 is an active-site residue. Glu158 functions as the Proton acceptor in the catalytic mechanism.

This sequence belongs to the peptidase M20A family. It depends on Co(2+) as a cofactor. The cofactor is Mn(2+). Zn(2+) is required as a cofactor. Fe(2+) serves as cofactor. Requires Ni(2+) as cofactor.

It catalyses the reaction 5-nitroanthranilate + H2O + H(+) = 5-nitrosalicylate + NH4(+). In terms of biological role, catalyzes the deamination of 5-nitroanthranilate (5NAA) to 5-nitrosalicylate (5NSA), the first step in biodegradation of 5-nitroanthranilate. In Bradyrhizobium sp, this protein is 5-nitroanthranilic acid aminohydrolase (naaA).